Consider the following 570-residue polypeptide: Sulfite reductase [NADPH] hemoprotein beta-component (570 aa).

Cysteine 434, cysteine 440, cysteine 479, and cysteine 483 together coordinate [4Fe-4S] cluster. Residue cysteine 483 coordinates siroheme.

This sequence belongs to the nitrite and sulfite reductase 4Fe-4S domain family. As to quaternary structure, alpha(8)-beta(8). The alpha component is a flavoprotein, the beta component is a hemoprotein. Siroheme serves as cofactor. The cofactor is [4Fe-4S] cluster.

It carries out the reaction hydrogen sulfide + 3 NADP(+) + 3 H2O = sulfite + 3 NADPH + 4 H(+). The protein operates within sulfur metabolism; hydrogen sulfide biosynthesis; hydrogen sulfide from sulfite (NADPH route): step 1/1. In terms of biological role, component of the sulfite reductase complex that catalyzes the 6-electron reduction of sulfite to sulfide. This is one of several activities required for the biosynthesis of L-cysteine from sulfate. The sequence is that of Sulfite reductase [NADPH] hemoprotein beta-component from Shigella dysenteriae serotype 1 (strain Sd197).